Consider the following 294-residue polypeptide: MQGPAGNASRGLPGGPPSTVASGAGRCESGALMHSFGIFLQGLLGVVAFSTLMLKRFREPKHERRPWRIWFLDTSKQAIGMLFIHFANVYLADLTEEDPCSLYLINFLLDATVGMLLIYVGVRAVSVLVEWQQWESLRFGEYGDPLQCGAWVGQCALYIVIMIFEKSVVFIVLLILQWKKVALLNPIENPDLKLAIVMLIVPFFVNALMFWVVDNFLMRKGKTKAKLEERGANQDSRNGSKVRYRRAASHEESESEILISADDEMEESDVEEDLRRLTPLKPVKKKKHRFGLPV.

The segment at methionine 1–serine 22 is disordered. At methionine 1–glutamate 28 the chain is on the cytoplasmic side. A run of 3 helical transmembrane segments spans residues serine 29–phenylalanine 49, isoleucine 69–valine 89, and leucine 102–valine 122. A GXXXG motif motif is present at residues glycine 149 to glycine 153. A run of 2 helical transmembrane segments spans residues alanine 156–leucine 176 and leucine 194–aspartate 214. Over asparagine 215–valine 294 the chain is Cytoplasmic. Residues leucine 227–serine 268 are disordered. A required for localization in the endoplasmic reticulum region spans residues lysine 241–arginine 246.

The protein belongs to the STIMATE family. Homooligomer. Interacts with STIM1. Widely expressed.

It is found in the endoplasmic reticulum membrane. Functionally, acts as a regulator of store-operated Ca(2+) entry (SOCE) at junctional sites that connect the endoplasmic reticulum (ER) and plasma membrane (PM), called ER-plasma membrane (ER-PM) junction or cortical ER. SOCE is a Ca(2+) influx following depletion of intracellular Ca(2+) stores. Acts by interacting with STIM1, promoting STIM1 conformational switch. Involved in STIM1 relocalization to ER-PM junctions. Contributes to the maintenance and reorganization of store-dependent ER-PM junctions. This Homo sapiens (Human) protein is Store-operated calcium entry regulator STIMATE.